The following is a 167-amino-acid chain: Stress-related protein (167 aa).

The protein belongs to the REF/SRPP family.

Functionally, plays a role in plant defense. This Phaseolus vulgaris (Kidney bean) protein is Stress-related protein (SRP).